A 386-amino-acid polypeptide reads, in one-letter code: GTPase Obg (386 aa).

The 159-residue stretch at 1–159 folds into the Obg domain; it reads MKFVDEAVIR…RSLKLELMLL (159 aa). Positions 160–333 constitute an OBG-type G domain; the sequence is ADVGLLGMPN…LSLKLVDFID (174 aa). GTP is bound by residues 166–173, 191–195, 213–216, 283–286, and 314–316; these read GMPNAGKS, FTTLV, DIPG, NKKD, and SAY. Mg(2+)-binding residues include Ser173 and Thr193. A disordered region spans residues 356-375; sequence KDSDSLNEDFDDSDDDDFDD. The span at 360 to 375 shows a compositional bias: acidic residues; that stretch reads SLNEDFDDSDDDDFDD.

This sequence belongs to the TRAFAC class OBG-HflX-like GTPase superfamily. OBG GTPase family. Monomer. Requires Mg(2+) as cofactor.

The protein resides in the cytoplasm. An essential GTPase which binds GTP, GDP and possibly (p)ppGpp with moderate affinity, with high nucleotide exchange rates and a fairly low GTP hydrolysis rate. Plays a role in control of the cell cycle, stress response, ribosome biogenesis and in those bacteria that undergo differentiation, in morphogenesis control. The sequence is that of GTPase Obg from Shewanella sediminis (strain HAW-EB3).